The chain runs to 327 residues: Embigin (327 aa).

Positions 1–32 (MRALPGLLEARARTPRLLLLQCLLAAARPSSA) are cleaved as a signal peptide. Over 33-260 (DGSAPDSPFT…ELVVLSYLVP (228 aa)) the chain is Extracellular. N-linked (GlcNAc...) asparagine glycosylation is found at asparagine 54, asparagine 61, asparagine 75, asparagine 85, asparagine 100, asparagine 189, asparagine 196, asparagine 213, and asparagine 218. Ig-like V-type domains follow at residues 71-158 (PVEK…NFKV) and 159-253 (PELH…IELV). 2 disulfides stabilise this stretch: cysteine 88–cysteine 142 and cysteine 180–cysteine 237. Residues 261–281 (LKPFLVIVAEVILLVATILLC) traverse the membrane as a helical segment. The Cytoplasmic segment spans residues 282-327 (EKYTQKKKKHSDEGKEFEQIEQLKSDDSNGIENNVPRHRKNESLGQ). The tract at residues 287-327 (KKKKHSDEGKEFEQIEQLKSDDSNGIENNVPRHRKNESLGQ) is disordered. Positions 291–308 (HSDEGKEFEQIEQLKSDD) are enriched in basic and acidic residues. At serine 309 the chain carries Phosphoserine.

In terms of assembly, interacts with SLC16A1, SLC16A6 and SLC16A7.

It is found in the cell membrane. It localises to the synapse. Its function is as follows. Plays a role in the outgrowth of motoneurons and in the formation of neuromuscular junctions. Following muscle denervation, promotes nerve terminal sprouting and the formation of additional acetylcholine receptor clusters at synaptic sites without affecting terminal Schwann cell number or morphology. Delays the retraction of terminal sprouts following re-innervation of denervated endplates. May play a role in targeting the monocarboxylate transporters SLC16A1, SLC16A6 and SLC16A7 to the cell membrane. The chain is Embigin (EMB) from Homo sapiens (Human).